The following is a 119-amino-acid chain: Small ribosomal subunit protein uS13 (119 aa).

Residues 92 to 119 (RRGLPVRGQQTQTNARTRKGPRRGPASR) form a disordered region.

This sequence belongs to the universal ribosomal protein uS13 family. Part of the 30S ribosomal subunit. Forms a loose heterodimer with protein S19. Forms two bridges to the 50S subunit in the 70S ribosome.

Located at the top of the head of the 30S subunit, it contacts several helices of the 16S rRNA. In the 70S ribosome it contacts the 23S rRNA (bridge B1a) and protein L5 of the 50S subunit (bridge B1b), connecting the 2 subunits; these bridges are implicated in subunit movement. Contacts the tRNAs in the A and P-sites. The polypeptide is Small ribosomal subunit protein uS13 (Halorhodospira halophila (strain DSM 244 / SL1) (Ectothiorhodospira halophila (strain DSM 244 / SL1))).